A 187-amino-acid polypeptide reads, in one-letter code: Large ribosomal subunit protein uL6 (187 aa).

This sequence belongs to the universal ribosomal protein uL6 family. As to quaternary structure, part of the 50S ribosomal subunit.

Functionally, this protein binds to the 23S rRNA, and is important in its secondary structure. It is located near the subunit interface in the base of the L7/L12 stalk, and near the tRNA binding site of the peptidyltransferase center. This chain is Large ribosomal subunit protein uL6, found in Roseiflexus castenholzii (strain DSM 13941 / HLO8).